The following is a 198-amino-acid chain: Dephospho-CoA kinase (198 aa).

Positions 2–90 (LIAIVGKPGV…KLSLVTKPLL (89 aa)) constitute a DPCK domain. 10 to 15 (GVGKTS) serves as a coordination point for ATP.

The protein belongs to the CoaE family.

The protein localises to the cytoplasm. It carries out the reaction 3'-dephospho-CoA + ATP = ADP + CoA + H(+). It participates in cofactor biosynthesis; coenzyme A biosynthesis; CoA from (R)-pantothenate: step 5/5. Its function is as follows. Catalyzes the phosphorylation of the 3'-hydroxyl group of dephosphocoenzyme A to form coenzyme A. This Mycoplasma genitalium (strain ATCC 33530 / DSM 19775 / NCTC 10195 / G37) (Mycoplasmoides genitalium) protein is Dephospho-CoA kinase.